We begin with the raw amino-acid sequence, 186 residues long: ATP synthase subunit delta (186 aa).

This sequence belongs to the ATPase delta chain family. As to quaternary structure, F-type ATPases have 2 components, F(1) - the catalytic core - and F(0) - the membrane proton channel. F(1) has five subunits: alpha(3), beta(3), gamma(1), delta(1), epsilon(1). CF(0) has four main subunits: a(1), b(1), b'(1) and c(10-14). The alpha and beta chains form an alternating ring which encloses part of the gamma chain. F(1) is attached to F(0) by a central stalk formed by the gamma and epsilon chains, while a peripheral stalk is formed by the delta, b and b' chains.

Its subcellular location is the cell inner membrane. Functionally, f(1)F(0) ATP synthase produces ATP from ADP in the presence of a proton or sodium gradient. F-type ATPases consist of two structural domains, F(1) containing the extramembraneous catalytic core and F(0) containing the membrane proton channel, linked together by a central stalk and a peripheral stalk. During catalysis, ATP synthesis in the catalytic domain of F(1) is coupled via a rotary mechanism of the central stalk subunits to proton translocation. This protein is part of the stalk that links CF(0) to CF(1). It either transmits conformational changes from CF(0) to CF(1) or is implicated in proton conduction. The protein is ATP synthase subunit delta of Jannaschia sp. (strain CCS1).